The sequence spans 318 residues: Cytochrome c biogenesis protein CcsA (318 aa).

Helical transmembrane passes span 17-37 (VLAL…ISFW), 45-65 (SAVV…QLVL), 75-95 (ISNL…AQLL), 104-124 (IVSA…SFAL), 149-169 (VIMC…AVLF), 224-244 (TITV…VWAN), 258-275 (TWAL…HTRF), and 287-307 (VAVA…LLGI).

This sequence belongs to the CcmF/CycK/Ccl1/NrfE/CcsA family. May interact with ccs1.

Its subcellular location is the cellular thylakoid membrane. In terms of biological role, required during biogenesis of c-type cytochromes (cytochrome c6 and cytochrome f) at the step of heme attachment. The protein is Cytochrome c biogenesis protein CcsA of Prochlorococcus marinus (strain MIT 9303).